The sequence spans 341 residues: MHIVLEFFLVTFKVLWAFVLAAAKWLVRPKDKSVAGQVCLITGAGSGLGRLFALEFARRRAQLVLWDINSQSNEETAEMVRSIYRELEAEDSARRAGNATEEEVQPCCNFQVYTYTCDVGKRESVYSTAERVRREVGDVYLLLNNAGVVSGHHLLECPDELIERTMMVNCHAHFWTTKAFLPKMMEMNHGHIVSVASSLGLFSTAGVEDYCASKFGVVGFHESLSHELKAADKDGIKTTLVCPYLVDTGMFRGCRIRKEIEPFLPPLKPDYCVKQAMRAILTDQPMICTPRLMYIVTCMKSILPFEAVVCMYRFLGADKCMYPFIAQRKQATNNNEAKNGI.

Residues 3 to 23 traverse the membrane as a helical; Signal-anchor segment; it reads IVLEFFLVTFKVLWAFVLAAA. 40–64 contacts NADP(+); it reads LITGAGSGLGRLFALEFARRRAQLV. S197 lines the substrate pocket. The active-site Proton acceptor is the Y210.

Belongs to the short-chain dehydrogenases/reductases (SDR) family.

The protein resides in the microsome membrane. It localises to the endoplasmic reticulum membrane. The enzyme catalyses all-trans-retinol + NADP(+) = all-trans-retinal + NADPH + H(+). The protein operates within cofactor metabolism; retinol metabolism. Functionally, retinol dehydrogenase with a clear preference for NADP. Converts all-trans-retinol to all-trans-retinal. Has no detectable activity towards 11-cis-retinol, 9-cis-retinol and 13-cis-retinol. The sequence is that of Retinol dehydrogenase 10 (rdh10) from Xenopus tropicalis (Western clawed frog).